We begin with the raw amino-acid sequence, 457 residues long: tRNA-2-methylthio-N(6)-dimethylallyladenosine synthase (457 aa).

The 118-residue stretch at 3 to 120 folds into the MTTase N-terminal domain; sequence KKVYVKTFGC…LPQMIDKRRE (118 aa). Positions 12, 49, 83, 157, 161, and 164 each coordinate [4Fe-4S] cluster. One can recognise a Radical SAM core domain in the interval 143 to 377; that stretch reads RVDGPSAFVS…QATIEENVQR (235 aa). Residues 380–447 enclose the TRAM domain; the sequence is DSMVGKIERI…PHSLRGELVL (68 aa).

Belongs to the methylthiotransferase family. MiaB subfamily. In terms of assembly, monomer. It depends on [4Fe-4S] cluster as a cofactor.

The protein resides in the cytoplasm. It catalyses the reaction N(6)-dimethylallyladenosine(37) in tRNA + (sulfur carrier)-SH + AH2 + 2 S-adenosyl-L-methionine = 2-methylsulfanyl-N(6)-dimethylallyladenosine(37) in tRNA + (sulfur carrier)-H + 5'-deoxyadenosine + L-methionine + A + S-adenosyl-L-homocysteine + 2 H(+). Catalyzes the methylthiolation of N6-(dimethylallyl)adenosine (i(6)A), leading to the formation of 2-methylthio-N6-(dimethylallyl)adenosine (ms(2)i(6)A) at position 37 in tRNAs that read codons beginning with uridine. This chain is tRNA-2-methylthio-N(6)-dimethylallyladenosine synthase, found in Paraburkholderia phytofirmans (strain DSM 17436 / LMG 22146 / PsJN) (Burkholderia phytofirmans).